Reading from the N-terminus, the 209-residue chain is Uridine kinase (209 aa).

Position 12-19 (12-19) interacts with ATP; the sequence is GGTGSGKS.

It belongs to the uridine kinase family.

It localises to the cytoplasm. The catalysed reaction is uridine + ATP = UMP + ADP + H(+). It catalyses the reaction cytidine + ATP = CMP + ADP + H(+). It functions in the pathway pyrimidine metabolism; CTP biosynthesis via salvage pathway; CTP from cytidine: step 1/3. The protein operates within pyrimidine metabolism; UMP biosynthesis via salvage pathway; UMP from uridine: step 1/1. The sequence is that of Uridine kinase from Clostridium tetani (strain Massachusetts / E88).